Reading from the N-terminus, the 231-residue chain is MASAVKVFLLDIEGTVCPISFVKDVLFPYALEALPHTLDSQWDDPAFAQYRDAFPAEYASSKEALAAHVRDLVSRDVKAPYLKSLQGYLWKNGYDSGEIRAPLFADVAPKFAAWQAAGIAIMIYSSGSVPAQKLLFGHTNSEPADLTSAIADFFDTVNAGPKTEIASYEKIASMHPQYPKNEWLFLSDNVKEVDAALGAGFQSFVVQRPGNPELPDGVEDRHKVIRSFEEL.

Positions 11 and 13 each coordinate Mg(2+). Substrate contacts are provided by residues 125–126 (SS) and lysine 162. Mg(2+) is bound at residue aspartate 188.

Belongs to the HAD-like hydrolase superfamily. MasA/MtnC family. In terms of assembly, monomer. Requires Mg(2+) as cofactor.

It localises to the cytoplasm. The protein localises to the nucleus. It carries out the reaction 5-methylsulfanyl-2,3-dioxopentyl phosphate + H2O = 1,2-dihydroxy-5-(methylsulfanyl)pent-1-en-3-one + phosphate. The protein operates within amino-acid biosynthesis; L-methionine biosynthesis via salvage pathway; L-methionine from S-methyl-5-thio-alpha-D-ribose 1-phosphate: step 3/6. It functions in the pathway amino-acid biosynthesis; L-methionine biosynthesis via salvage pathway; L-methionine from S-methyl-5-thio-alpha-D-ribose 1-phosphate: step 4/6. In terms of biological role, bifunctional enzyme that catalyzes the enolization of 2,3-diketo-5-methylthiopentyl-1-phosphate (DK-MTP-1-P) into the intermediate 2-hydroxy-3-keto-5-methylthiopentenyl-1-phosphate (HK-MTPenyl-1-P), which is then dephosphorylated to form the acireductone 1,2-dihydroxy-3-keto-5-methylthiopentene (DHK-MTPene). This is Enolase-phosphatase E1 from Pyricularia oryzae (strain 70-15 / ATCC MYA-4617 / FGSC 8958) (Rice blast fungus).